A 435-amino-acid polypeptide reads, in one-letter code: tRNA modification GTPase MnmE (435 aa).

Positions 20, 77, and 117 each coordinate (6S)-5-formyl-5,6,7,8-tetrahydrofolate. One can recognise a TrmE-type G domain in the interval 214–359 (GLKIVIAGAP…FIKKLESFCH (146 aa)). GTP is bound by residues 224–229 (NSGKSS), 243–249 (TEEAGTT), and 268–271 (DTAG). Positions 228 and 249 each coordinate Mg(2+). Lys-435 contacts (6S)-5-formyl-5,6,7,8-tetrahydrofolate.

This sequence belongs to the TRAFAC class TrmE-Era-EngA-EngB-Septin-like GTPase superfamily. TrmE GTPase family. In terms of assembly, homodimer. Heterotetramer of two MnmE and two MnmG subunits. The cofactor is K(+).

Its subcellular location is the cytoplasm. Exhibits a very high intrinsic GTPase hydrolysis rate. Involved in the addition of a carboxymethylaminomethyl (cmnm) group at the wobble position (U34) of certain tRNAs, forming tRNA-cmnm(5)s(2)U34. In Bartonella tribocorum (strain CIP 105476 / IBS 506), this protein is tRNA modification GTPase MnmE.